A 325-amino-acid polypeptide reads, in one-letter code: Beta-ketoacyl-[acyl-carrier-protein] synthase III (325 aa).

Catalysis depends on residues Cys112 and His250. The tract at residues 251 to 255 is ACP-binding; that stretch reads QANIR. Residue Asn280 is part of the active site.

It belongs to the thiolase-like superfamily. FabH family. Homodimer.

It localises to the cytoplasm. It catalyses the reaction malonyl-[ACP] + acetyl-CoA + H(+) = 3-oxobutanoyl-[ACP] + CO2 + CoA. The protein operates within lipid metabolism; fatty acid biosynthesis. Catalyzes the condensation reaction of fatty acid synthesis by the addition to an acyl acceptor of two carbons from malonyl-ACP. Catalyzes the first condensation reaction which initiates fatty acid synthesis and may therefore play a role in governing the total rate of fatty acid production. Possesses both acetoacetyl-ACP synthase and acetyl transacylase activities. Its substrate specificity determines the biosynthesis of branched-chain and/or straight-chain of fatty acids. The polypeptide is Beta-ketoacyl-[acyl-carrier-protein] synthase III (Streptococcus mutans serotype c (strain ATCC 700610 / UA159)).